The primary structure comprises 577 residues: Efflux pump notK' (577 aa).

2 N-linked (GlcNAc...) asparagine glycosylation sites follow: N62 and N84. 5 helical membrane passes run 104–124, 151–171, 189–209, 241–261, and 265–285; these read AAIA…PVAL, LAVT…MLGI, AGIG…LGLV, NPTM…LMMY, and GAVI…TTPV. The N-linked (GlcNAc...) asparagine glycan is linked to N320. 5 consecutive transmembrane segments (helical) span residues 328–348, 373–393, 413–433, 434–454, and 476–496; these read FGLA…GTLY, VDAI…TAFV, GICF…PPWA, TGST…EINW, and IADG…GVWV. The span at 555 to 566 shows a compositional bias: low complexity; sequence MPPNGSMSSGSP. Positions 555-577 are disordered; the sequence is MPPNGSMSSGSPEQVAEKAVGKY. N-linked (GlcNAc...) asparagine glycosylation is present at N558.

Belongs to the nucleobase:cation symporter-2 (NCS2) (TC 2.A.40) family. Azg-like subfamily.

It is found in the cell membrane. Efflux pump; part of the gene cluster that mediates the biosynthesis of notoamide, a fungal indole alkaloid that belongs to a family of natural products containing a characteristic bicyclo[2.2.2]diazaoctane core. This is Efflux pump notK' from Aspergillus versicolor.